Consider the following 129-residue polypeptide: MSRKESRVQAFQTLFQLEMKDSDLTINEAISFIKDDNPDLDFEFIHWLVSGVKDHEPVLDETISPYLKDWTIARLLKTDRIILRMATYEILHSDTPAKVVMNEAVELTKQFSDDDHYKFINGVLSNIKK.

It belongs to the NusB family.

Functionally, involved in transcription antitermination. Required for transcription of ribosomal RNA (rRNA) genes. Binds specifically to the boxA antiterminator sequence of the ribosomal RNA (rrn) operons. The chain is Transcription antitermination protein NusB from Staphylococcus aureus (strain N315).